Consider the following 287-residue polypeptide: Putative holocytochrome-c1 synthase (287 aa).

Over residues 1–12 (MRGFGSDSSQAS) the composition is skewed to polar residues. Disordered stretches follow at residues 1-63 (MRGF…QPSS) and 81-100 (QSQSANSTQQAQPPKLSAPL). Composition is skewed to low complexity over residues 31–63 (QARAAQSASTSAAPALPQSVQVAPASQPSQPSS) and 81–92 (QSQSANSTQQAQ).

It belongs to the cytochrome c-type heme lyase family.

The protein resides in the mitochondrion inner membrane. The catalysed reaction is holo-[cytochrome c] = apo-[cytochrome c] + heme b. Functionally, probable lyase that catalyzes the covalent linking of the heme group to the cytochrome C apoprotein to produce the mature functional cytochrome. The polypeptide is Putative holocytochrome-c1 synthase (Chaetomium thermophilum (strain DSM 1495 / CBS 144.50 / IMI 039719) (Thermochaetoides thermophila)).